The sequence spans 475 residues: Ribulose bisphosphate carboxylase large chain (475 aa).

N123 and T173 together coordinate substrate. The Proton acceptor role is filled by K175. Substrate is bound at residue K177. Residues K201, D203, and E204 each coordinate Mg(2+). The residue at position 201 (K201) is an N6-carboxylysine. Residue H294 is the Proton acceptor of the active site. Positions 295, 327, and 379 each coordinate substrate.

This sequence belongs to the RuBisCO large chain family. Type I subfamily. In terms of assembly, heterohexadecamer of 8 large chains and 8 small chains; disulfide-linked. The disulfide link is formed within the large subunit homodimers. It depends on Mg(2+) as a cofactor. Post-translationally, the disulfide bond which can form in the large chain dimeric partners within the hexadecamer appears to be associated with oxidative stress and protein turnover.

Its subcellular location is the plastid. It localises to the chloroplast. The catalysed reaction is 2 (2R)-3-phosphoglycerate + 2 H(+) = D-ribulose 1,5-bisphosphate + CO2 + H2O. The enzyme catalyses D-ribulose 1,5-bisphosphate + O2 = 2-phosphoglycolate + (2R)-3-phosphoglycerate + 2 H(+). In terms of biological role, ruBisCO catalyzes two reactions: the carboxylation of D-ribulose 1,5-bisphosphate, the primary event in carbon dioxide fixation, as well as the oxidative fragmentation of the pentose substrate in the photorespiration process. Both reactions occur simultaneously and in competition at the same active site. The polypeptide is Ribulose bisphosphate carboxylase large chain (Euglena gracilis).